We begin with the raw amino-acid sequence, 150 residues long: SsrA-binding protein (150 aa).

It belongs to the SmpB family.

It is found in the cytoplasm. Required for rescue of stalled ribosomes mediated by trans-translation. Binds to transfer-messenger RNA (tmRNA), required for stable association of tmRNA with ribosomes. tmRNA and SmpB together mimic tRNA shape, replacing the anticodon stem-loop with SmpB. tmRNA is encoded by the ssrA gene; the 2 termini fold to resemble tRNA(Ala) and it encodes a 'tag peptide', a short internal open reading frame. During trans-translation Ala-aminoacylated tmRNA acts like a tRNA, entering the A-site of stalled ribosomes, displacing the stalled mRNA. The ribosome then switches to translate the ORF on the tmRNA; the nascent peptide is terminated with the 'tag peptide' encoded by the tmRNA and targeted for degradation. The ribosome is freed to recommence translation, which seems to be the essential function of trans-translation. This is SsrA-binding protein from Campylobacter curvus (strain 525.92).